We begin with the raw amino-acid sequence, 326 residues long: Putative ABC transporter ATP-binding protein MA_4020 (326 aa).

The span at 1 to 12 (MTISTLSSSYGN) shows a compositional bias: polar residues. The disordered stretch occupies residues 1-34 (MTISTLSSSYGNAQDVPAEDSDRHGSIEPGSEKA). The ABC transporter domain occupies 46–281 (LEVKNLCHRY…PELLRKAHLR (236 aa)). ATP is bound at residue 80–87 (GANGAGKS).

It belongs to the ABC transporter superfamily.

The protein localises to the cell membrane. Probably part of an ABC transporter complex. Responsible for energy coupling to the transport system. This is Putative ABC transporter ATP-binding protein MA_4020 from Methanosarcina acetivorans (strain ATCC 35395 / DSM 2834 / JCM 12185 / C2A).